Reading from the N-terminus, the 390-residue chain is Putative gustatory receptor 59d (390 aa).

Over 1–38 (MADLLKLCLRIAYAYGRLTGVINFKIDLKTGQALVTRG) the chain is Cytoplasmic. A helical transmembrane segment spans residues 39 to 59 (ATLISVSTHLLIFALLLYQTM). Over 60-75 (RKSVVNVMWKYANSLH) the chain is Extracellular. The chain crosses the membrane as a helical span at residues 76–96 (EYVFLVIAGFRVVCVFLELVS). The Cytoplasmic segment spans residues 97–128 (RWSQRRTFVRLFNSFRRLYQRNPDIIQYCRRS). A helical membrane pass occupies residues 129–149 (IVSKFFCVTMTETLHIIVTLA). The Extracellular portion of the chain corresponds to 150-156 (MMRNRLS). A helical transmembrane segment spans residues 157–177 (IALALRIWAVLSLTAIINVII). Residues 178–252 (TQYYVATACV…NLSTAYEGEV (75 aa)) lie on the Cytoplasmic side of the membrane. The chain crosses the membrane as a helical span at residues 253 to 273 (VCLVITYYLNMLGTSYLLFSI). At 274 to 283 (SKYGNFGNNL) the chain is on the extracellular side. Residues 284–304 (LVIITLCGIVYFVFYVVDCWI) form a helical membrane-spanning segment. The Cytoplasmic segment spans residues 305 to 366 (NAFNVFYLLD…MYGLFEFGRG (62 aa)). Residues 367 to 383 (TSFAVFNSLLTHSLLLI) traverse the membrane as a helical segment. The Extracellular portion of the chain corresponds to 384–390 (QYDVQNF).

It belongs to the insect chemoreceptor superfamily. Gustatory receptor (GR) family. Gr22e subfamily. Expressed in the adult labellar chemosensory neurons. In larvae, is expressed in neurons of the terminal external chemosensory organ as well as in the dorsal pharyngeal sense organ.

It localises to the cell membrane. Functionally, probable gustatory receptor which mediates acceptance or avoidance behavior, depending on its substrates. In Drosophila melanogaster (Fruit fly), this protein is Putative gustatory receptor 59d (Gr59d).